A 92-amino-acid chain; its full sequence is Putative pterin-4-alpha-carbinolamine dehydratase 2 (92 aa).

This sequence belongs to the pterin-4-alpha-carbinolamine dehydratase family.

The catalysed reaction is (4aS,6R)-4a-hydroxy-L-erythro-5,6,7,8-tetrahydrobiopterin = (6R)-L-erythro-6,7-dihydrobiopterin + H2O. This Gloeobacter violaceus (strain ATCC 29082 / PCC 7421) protein is Putative pterin-4-alpha-carbinolamine dehydratase 2.